The sequence spans 133 residues: MVKNTIEESVATGRRKQAVSSVRLRPGTGKIDVNGKAFDEYFPLEIQRVTILSPLKVLGYSNDFDLVIRINGGGIQGQVIATRLGLARALLKKNVDSKQELKSHGFLTRDPRKKERKKYGHKKARKSFQFSKR.

A compositionally biased stretch (basic and acidic residues) spans 97–113; it reads SKQELKSHGFLTRDPRK. The interval 97–133 is disordered; the sequence is SKQELKSHGFLTRDPRKKERKKYGHKKARKSFQFSKR. Residues 114-133 show a composition bias toward basic residues; it reads KERKKYGHKKARKSFQFSKR.

This sequence belongs to the universal ribosomal protein uS9 family.

The sequence is that of Small ribosomal subunit protein uS9 from Chlamydia abortus (strain DSM 27085 / S26/3) (Chlamydophila abortus).